Consider the following 151-residue polypeptide: 6,7-dimethyl-8-ribityllumazine synthase (151 aa).

5-amino-6-(D-ribitylamino)uracil is bound by residues Phe23, 55–57, and 79–81; these read AYE and AVI. 84–85 provides a ligand contact to (2S)-2-hydroxy-3-oxobutyl phosphate; sequence AT. The active-site Proton donor is the His87. Phe111 serves as a coordination point for 5-amino-6-(D-ribitylamino)uracil. Arg125 is a (2S)-2-hydroxy-3-oxobutyl phosphate binding site.

It belongs to the DMRL synthase family.

It carries out the reaction (2S)-2-hydroxy-3-oxobutyl phosphate + 5-amino-6-(D-ribitylamino)uracil = 6,7-dimethyl-8-(1-D-ribityl)lumazine + phosphate + 2 H2O + H(+). Its pathway is cofactor biosynthesis; riboflavin biosynthesis; riboflavin from 2-hydroxy-3-oxobutyl phosphate and 5-amino-6-(D-ribitylamino)uracil: step 1/2. In terms of biological role, catalyzes the formation of 6,7-dimethyl-8-ribityllumazine by condensation of 5-amino-6-(D-ribitylamino)uracil with 3,4-dihydroxy-2-butanone 4-phosphate. This is the penultimate step in the biosynthesis of riboflavin. This Leptospira interrogans serogroup Icterohaemorrhagiae serovar copenhageni (strain Fiocruz L1-130) protein is 6,7-dimethyl-8-ribityllumazine synthase.